The primary structure comprises 251 residues: V-set and transmembrane domain-containing protein 2B (251 aa).

A signal peptide spans 1–25; sequence MEKQGLFSALCYLMLNTPLLFSVNA. The 117-residue stretch at 26–142 folds into the Ig-like V-type domain; it reads TFTEVPKDVT…DETQEHKAQA (117 aa). The Extracellular segment spans residues 26–226; that stretch reads TFTEVPKDVT…RQQHGSGTGP (201 aa). Cysteines 46 and 125 form a disulfide. Residues 157 to 213 form a disordered region; that stretch reads AAEAVSHIQSSGPRRNNPSSRATPEPGNKRAVPPAENLAPSLSTAASSSASPAPGKA. Low complexity-rich tracts occupy residues 166–177 and 195–213; these read SSGPRRNNPSSR and APSL…PGKA. A helical membrane pass occupies residues 227-247; sequence IFANDPALYMFLLIFHQLVYL. At 248 to 251 the chain is on the cytoplasmic side; that stretch reads LLNH.

It is found in the membrane. In Xenopus tropicalis (Western clawed frog), this protein is V-set and transmembrane domain-containing protein 2B (vstm2b).